The primary structure comprises 245 residues: uncharacterized protein (245 aa).

This is an uncharacterized protein from Bacillus subtilis (strain 168).